Here is a 183-residue protein sequence, read N- to C-terminus: 3-hydroxydecanoyl-[acyl-carrier-protein] dehydratase (183 aa).

His-77 is a catalytic residue.

Belongs to the thioester dehydratase family. FabA subfamily. Homodimer.

It is found in the cytoplasm. The catalysed reaction is a (3R)-hydroxyacyl-[ACP] = a (2E)-enoyl-[ACP] + H2O. It carries out the reaction (3R)-hydroxydecanoyl-[ACP] = (2E)-decenoyl-[ACP] + H2O. The enzyme catalyses (2E)-decenoyl-[ACP] = (3Z)-decenoyl-[ACP]. It functions in the pathway lipid metabolism; fatty acid biosynthesis. Its function is as follows. Necessary for the introduction of cis unsaturation into fatty acids. Catalyzes the dehydration of (3R)-3-hydroxydecanoyl-ACP to E-(2)-decenoyl-ACP and then its isomerization to Z-(3)-decenoyl-ACP. Can catalyze the dehydratase reaction for beta-hydroxyacyl-ACPs with saturated chain lengths up to 16:0, being most active on intermediate chain length. The polypeptide is 3-hydroxydecanoyl-[acyl-carrier-protein] dehydratase (Hahella chejuensis (strain KCTC 2396)).